A 144-amino-acid chain; its full sequence is Large ribosomal subunit protein uL24 (144 aa).

Residues 102–144 (NIVVEKPEPEPEPRKEETAEAQEAKEEAVAEEKTEVDDNDKQN) form a disordered region. The segment covering 103–134 (IVVEKPEPEPEPRKEETAEAQEAKEEAVAEEK) has biased composition (basic and acidic residues). The span at 135–144 (TEVDDNDKQN) shows a compositional bias: acidic residues.

It belongs to the universal ribosomal protein uL24 family. Part of the 50S ribosomal subunit.

In terms of biological role, one of two assembly initiator proteins, it binds directly to the 5'-end of the 23S rRNA, where it nucleates assembly of the 50S subunit. Functionally, located at the polypeptide exit tunnel on the outside of the subunit. This Thermoplasma acidophilum (strain ATCC 25905 / DSM 1728 / JCM 9062 / NBRC 15155 / AMRC-C165) protein is Large ribosomal subunit protein uL24 (rpl24).